Reading from the N-terminus, the 76-residue chain is Conotoxin VnMEKL-012 (76 aa).

Residues 1 to 18 (MKLTILFLVAAVLMSTQA) form the signal peptide. The propeptide occupies 19–42 (LIQHDGEKSQKAKMKFLTARTLSA). Disulfide bonds link Cys49–Cys65, Cys56–Cys70, and Cys64–Cys74.

Belongs to the conotoxin O2 superfamily. Expressed by the venom duct.

The protein resides in the secreted. The protein is Conotoxin VnMEKL-012 of Conus ventricosus (Mediterranean cone).